Reading from the N-terminus, the 906-residue chain is Cadherin-2 (906 aa).

The N-terminal stretch at 1 to 25 is a signal peptide; sequence MCRIAGGPRTLLPLLAALLQASLEA. The propeptide occupies 26-159; that stretch reads SGELALCKTG…HSGALQRQKR (134 aa). A Phosphoserine modification is found at S96. Cadherin domains are found at residues 160–267, 268–382, 383–497, 498–603, and 604–717; these read DWVI…RPEF, LHQV…PPEF, TAMT…NPYF, APNP…DNAP, and QVLP…RIVG. Residues 160 to 724 lie on the Extracellular side of the membrane; it reads DWVIPPINLP…IVGAGLGTGT (565 aa). E170 is a binding site for Ca(2+). N190 carries N-linked (GlcNAc...) asparagine glycosylation. The Ca(2+) site is built by D226, E228, D259, M260, N261, D262, and N263. N273 carries N-linked (GlcNAc...) asparagine glycosylation. Ca(2+)-binding residues include D293, D295, and N301. N325 carries an N-linked (GlcNAc...) asparagine glycan. Ca(2+) is bound at residue D353. N-linked (GlcNAc...) asparagine glycosylation is found at N402, N572, N622, N651, and N692. The helical transmembrane segment at 725–745 threads the bilayer; it reads IIAILLCIIILLILVLMFVVW. Residues 746–906 are Cytoplasmic-facing; it reads MKRRDKERQA…LADMYGGGDD (161 aa). Residues 863–880 show a composition bias toward low complexity; it reads SGSTAGSLSSLNSSSSGG. The interval 863–883 is disordered; sequence SGSTAGSLSSLNSSSSGGDQD.

In terms of assembly, homodimer (via extracellular region). Can also form heterodimers with other cadherins (via extracellular region). Dimerization occurs in trans, i.e. with a cadherin chain from another cell. Interacts with PCDH8; this complex may also include TAOK2. The interaction with PCDH8 may lead to internalization through TAOK2/p38 MAPK pathway. Identified in a complex containing FGFR4, NCAM1, CDH2, PLCG1, FRS2, SRC, SHC1, GAP43 and CTTN. May interact with OBSCN (via protein kinase domain 2). Interacts with FBXO45. In terms of processing, cleaved by MMP24. Ectodomain cleavage leads to the generation of a soluble 90 kDa N-terminal soluble fragment and a 45 kDa membrane-bound C-terminal fragment 1 (CTF1), which is further cleaved by gamma-secretase into a 35 kDa. Cleavage in neural stem cells by MMP24 affects CDH2-mediated anchorage of neural stem cells to ependymocytes in the adult subependymal zone, leading to modulate neural stem cell quiescence. Post-translationally, may be phosphorylated by OBSCN. In terms of tissue distribution, in testis, expressed in Sertoli and germ cells.

Its subcellular location is the cell membrane. It is found in the sarcolemma. It localises to the cell junction. The protein resides in the cell surface. The protein localises to the desmosome. Its subcellular location is the adherens junction. In terms of biological role, calcium-dependent cell adhesion protein; preferentially mediates homotypic cell-cell adhesion by dimerization with a CDH2 chain from another cell. Cadherins may thus contribute to the sorting of heterogeneous cell types. Acts as a regulator of neural stem cells quiescence by mediating anchorage of neural stem cells to ependymocytes in the adult subependymal zone: upon cleavage by MMP24, CDH2-mediated anchorage is affected, leading to modulate neural stem cell quiescence. Plays a role in cell-to-cell junction formation between pancreatic beta cells and neural crest stem (NCS) cells, promoting the formation of processes by NCS cells. Required for proper neurite branching. Required for pre- and postsynaptic organization. CDH2 may be involved in neuronal recognition mechanism. In hippocampal neurons, may regulate dendritic spine density. In Rattus norvegicus (Rat), this protein is Cadherin-2 (Cdh2).